Reading from the N-terminus, the 411-residue chain is Serpin A12 (411 aa).

Positions 1–20 are cleaved as a signal peptide; it reads MNLVLGLGLFLAGLLTVKGL. Residues asparagine 92 and asparagine 267 are each glycosylated (N-linked (GlcNAc...) asparagine). The reactive center loop stretch occupies residues 364 to 382; sequence GTEGAAGSGAQTLPMETPR.

The protein belongs to the serpin family. In terms of assembly, forms a stable complex with KLK7. Post-translationally, glycosylation slightly decreases affinity for heparin, but otherwise has no significant effect on KLK7 inhibitory activity or thermal stability of the protein. In terms of tissue distribution, expressed in visceral adipose tissues.

The protein localises to the secreted. With respect to regulation, inhibition of KLK7 is enhanced by heparin. Adipokine that modulates insulin action by specifically inhibiting its target protease KLK7 in white adipose tissues. The polypeptide is Serpin A12 (Serpina12) (Rattus norvegicus (Rat)).